Reading from the N-terminus, the 100-residue chain is Integration host factor subunit alpha (100 aa).

The protein belongs to the bacterial histone-like protein family. In terms of assembly, heterodimer of an alpha and a beta chain.

Its function is as follows. This protein is one of the two subunits of integration host factor, a specific DNA-binding protein that functions in genetic recombination as well as in transcriptional and translational control. The chain is Integration host factor subunit alpha from Methylobacillus flagellatus (strain ATCC 51484 / DSM 6875 / VKM B-1610 / KT).